We begin with the raw amino-acid sequence, 627 residues long: Anti-CBASS protein Acb1 (627 aa).

Position 105 (Tyr105) interacts with 3',3'-cGAMP. Tyr105 lines the 3',3'-cUAMP pocket. A disordered region spans residues 437-474 (LADQPETESANENTEQPESGEEGEEGQPTRRAANDAKP). Catalysis depends on residues His508, Thr510, His584, and Thr586. Residues Glu614 and Trp620 each contribute to the 3',3'-cGAMP site. 3',3'-cUAMP is bound by residues Glu614 and Trp620.

It belongs to the anti-CBASS protein Acb1 family.

The catalysed reaction is 3',3'-cUAMP + H2O = U[3'-5']pAp[3'] + H(+). It carries out the reaction 3',3',3'-c-tri-AMP + H2O = A[3'-5']pA[3'-5']pAp[3'] + H(+). It catalyses the reaction 3',3',3'-cAAG + H2O = G[3'-5']pA[3'-5']pAp[3'] + H(+). The enzyme catalyses 3',3',3'-cAAG + H2O = A[3'-5']pG[3'-5']pAp[3'] + H(+). The catalysed reaction is 3',3'-cGAMP + H2O = G[3'-5']pAp[3'] + H(+). Its function is as follows. Counteracts or regulates the endogenous CBASS antiviral defense system. Phosphodiesterase that enables metal-independent hydrolysis of the host cyclic di- and trinucleotide CBASS signals such as 3'3'-cGAMP, 3'3'cUA, and 3'3'3'-cAAA. The sequence is that of Anti-CBASS protein Acb1 from Caulobacter sp. (strain RHG1).